The primary structure comprises 86 residues: MVKKEAIIKAVNGLHVRPASTFVKKAKEYSSEITIESDGKSVSGKSLFRLQTLELSSGKKLLICAEGEDEEIAASELAELIESFKE.

One can recognise an HPr domain in the interval 1–86 (MVKKEAIIKA…LAELIESFKE (86 aa)). The active-site Pros-phosphohistidine intermediate is the His-15.

It belongs to the HPr family.

It is found in the cytoplasm. General (non sugar-specific) component of the phosphoenolpyruvate-dependent sugar phosphotransferase system (sugar PTS). This major carbohydrate active-transport system catalyzes the phosphorylation of incoming sugar substrates concomitantly with their translocation across the cell membrane. The phosphoryl group from phosphoenolpyruvate (PEP) is transferred to the phosphoryl carrier protein HPr by enzyme I. Phospho-HPr then transfers it to the PTS EIIA domain. This Borreliella burgdorferi (strain ATCC 35210 / DSM 4680 / CIP 102532 / B31) (Borrelia burgdorferi) protein is Phosphocarrier protein HPr (ptsH).